The following is a 327-amino-acid chain: DNA repair and recombination protein RadA (327 aa).

113–120 contacts ATP; the sequence is GEFGSGKS.

It belongs to the eukaryotic RecA-like protein family.

Involved in DNA repair and in homologous recombination. Binds and assemble on single-stranded DNA to form a nucleoprotein filament. Hydrolyzes ATP in a ssDNA-dependent manner and promotes DNA strand exchange between homologous DNA molecules. The protein is DNA repair and recombination protein RadA of Ignicoccus hospitalis (strain KIN4/I / DSM 18386 / JCM 14125).